We begin with the raw amino-acid sequence, 465 residues long: GTPase Der (465 aa).

EngA-type G domains follow at residues proline 3–glycine 167 and isoleucine 179–asparagine 352. GTP contacts are provided by residues glycine 9–serine 16, aspartate 57–isoleucine 61, asparagine 119–aspartate 122, glycine 185–serine 192, aspartate 232–leucine 236, and asparagine 297–aspartate 300. The KH-like domain occupies lysine 353–threonine 437.

This sequence belongs to the TRAFAC class TrmE-Era-EngA-EngB-Septin-like GTPase superfamily. EngA (Der) GTPase family. In terms of assembly, associates with the 50S ribosomal subunit.

Functionally, GTPase that plays an essential role in the late steps of ribosome biogenesis. This chain is GTPase Der, found in Stenotrophomonas maltophilia (strain R551-3).